The primary structure comprises 498 residues: Type II secretion system protein E (498 aa).

ATP is bound at residue Gly261 to Ser268. Zn(2+) is bound by residues Cys394, Cys397, Cys425, and Cys428.

This sequence belongs to the GSP E family. Forms homooligomers; most probably hexamers. Interacts with OutL/GspL. Zn(2+) serves as cofactor.

The protein localises to the cell inner membrane. It catalyses the reaction ATP + H2O + cellular proteinSide 1 = ADP + phosphate + cellular proteinSide 2.. Its function is as follows. ATPase component of the type II secretion system required for the energy-dependent secretion of extracellular factors such as proteases and toxins from the periplasm. Acts as a molecular motor to provide the energy that is required for assembly of the pseudopilus and the extrusion of substrates generated in the cytoplasm. The polypeptide is Type II secretion system protein E (outE) (Pectobacterium carotovorum subsp. carotovorum (Erwinia carotovora subsp. carotovora)).